Reading from the N-terminus, the 126-residue chain is Large ribosomal subunit protein bL12 (126 aa).

This sequence belongs to the bacterial ribosomal protein bL12 family. Homodimer. Part of the ribosomal stalk of the 50S ribosomal subunit. Forms a multimeric L10(L12)X complex, where L10 forms an elongated spine to which 2 to 4 L12 dimers bind in a sequential fashion. Binds GTP-bound translation factors.

Forms part of the ribosomal stalk which helps the ribosome interact with GTP-bound translation factors. Is thus essential for accurate translation. The chain is Large ribosomal subunit protein bL12 from Geobacter sp. (strain M21).